Here is a 334-residue protein sequence, read N- to C-terminus: Holliday junction branch migration complex subunit RuvB (334 aa).

The tract at residues Ala-4–Tyr-184 is large ATPase domain (RuvB-L). ATP-binding positions include Arg-24, Gly-65, Lys-68, Thr-69, Thr-70, Glu-131–Tyr-133, Arg-174, Tyr-184, and Arg-221. Mg(2+) is bound at residue Thr-69. The interval Asn-185–Asp-255 is small ATPAse domain (RuvB-S). The tract at residues Asn-258–Glu-334 is head domain (RuvB-H). DNA contacts are provided by Arg-294, Arg-313, and Arg-318.

The protein belongs to the RuvB family. Homohexamer. Forms an RuvA(8)-RuvB(12)-Holliday junction (HJ) complex. HJ DNA is sandwiched between 2 RuvA tetramers; dsDNA enters through RuvA and exits via RuvB. An RuvB hexamer assembles on each DNA strand where it exits the tetramer. Each RuvB hexamer is contacted by two RuvA subunits (via domain III) on 2 adjacent RuvB subunits; this complex drives branch migration. In the full resolvosome a probable DNA-RuvA(4)-RuvB(12)-RuvC(2) complex forms which resolves the HJ.

Its subcellular location is the cytoplasm. It catalyses the reaction ATP + H2O = ADP + phosphate + H(+). The RuvA-RuvB-RuvC complex processes Holliday junction (HJ) DNA during genetic recombination and DNA repair, while the RuvA-RuvB complex plays an important role in the rescue of blocked DNA replication forks via replication fork reversal (RFR). RuvA specifically binds to HJ cruciform DNA, conferring on it an open structure. The RuvB hexamer acts as an ATP-dependent pump, pulling dsDNA into and through the RuvAB complex. RuvB forms 2 homohexamers on either side of HJ DNA bound by 1 or 2 RuvA tetramers; 4 subunits per hexamer contact DNA at a time. Coordinated motions by a converter formed by DNA-disengaged RuvB subunits stimulates ATP hydrolysis and nucleotide exchange. Immobilization of the converter enables RuvB to convert the ATP-contained energy into a lever motion, pulling 2 nucleotides of DNA out of the RuvA tetramer per ATP hydrolyzed, thus driving DNA branch migration. The RuvB motors rotate together with the DNA substrate, which together with the progressing nucleotide cycle form the mechanistic basis for DNA recombination by continuous HJ branch migration. Branch migration allows RuvC to scan DNA until it finds its consensus sequence, where it cleaves and resolves cruciform DNA. The protein is Holliday junction branch migration complex subunit RuvB of Shewanella sp. (strain W3-18-1).